The primary structure comprises 2208 residues: RNA-directed RNA polymerase L (2208 aa).

The tract at residues 26 to 284 is endonuclease; that stretch reads KEALLSQVEV…SHAGTTVPEC (259 aa). Mn(2+) is bound by residues E51, D89, and E102. Residue K115 is part of the active site. Residues 1172 to 1370 form the RdRp catalytic domain; that stretch reads CDMKMAVNNG…FLSSKLNKFV (199 aa). A Mg(2+)-binding site is contributed by D1330.

It belongs to the Bunyavirales RNA polymerase family. In terms of assembly, homomultimer; the oligomeric structure is essential for the polymerase activity. Interacts with nucleoprotein N. Interacts with protein Z; this interaction inhibits viral transcription and replication, Z partially blocks the product exit tunnel for the releasing nascent RNA product. It depends on Mn(2+) as a cofactor. Mg(2+) is required as a cofactor.

The protein localises to the virion. It localises to the host cytoplasm. It carries out the reaction RNA(n) + a ribonucleoside 5'-triphosphate = RNA(n+1) + diphosphate. RNA-dependent RNA polymerase, which is responsible for the replication and transcription of the viral RNA genome using antigenomic RNA as an intermediate. During transcription, synthesizes subgenomic RNAs and assures their capping by a cap-snatching mechanism, which involves the endonuclease activity cleaving the host capped pre-mRNAs. These short capped RNAs are then used as primers for viral transcription. The 3'-end of subgenomic mRNAs molecules are heterogeneous and not polyadenylated. The replicase function is to direct synthesis of antigenomic and genomic RNA which are encapsidated and non capped. As a consequence of the use of the same enzyme for both transcription and replication, these mechanisms need to be well coordinated. These processes may be regulated by proteins N and Z in a dose-dependent manner. Z protein inhibits the viral polymerase L und thus the viral transcription and RNA synthesis. This is RNA-directed RNA polymerase L from Hylaeamys megacephalus (Large-headed rice rat).